Reading from the N-terminus, the 537-residue chain is Arginine--tRNA ligase (537 aa).

The 'HIGH' region motif lies at 113–123 (ANPTGRIHLGH).

It belongs to the class-I aminoacyl-tRNA synthetase family. Monomer.

It is found in the cytoplasm. The enzyme catalyses tRNA(Arg) + L-arginine + ATP = L-arginyl-tRNA(Arg) + AMP + diphosphate. The protein is Arginine--tRNA ligase (argS) of Mycoplasma genitalium (strain ATCC 33530 / DSM 19775 / NCTC 10195 / G37) (Mycoplasmoides genitalium).